The following is a 59-amino-acid chain: Large ribosomal subunit protein uL30 (59 aa).

Belongs to the universal ribosomal protein uL30 family. As to quaternary structure, part of the 50S ribosomal subunit.

In Persephonella marina (strain DSM 14350 / EX-H1), this protein is Large ribosomal subunit protein uL30.